Consider the following 316-residue polypeptide: MANLKEIRDRIKSVKNTRKITEAMRLVAAAKVRRAQEQVLRSRPFADRLARILENLQSRMGFEDAASPLMQQRNVETITLVAVTGDRGLCGGYNANIIKRTEQRFAELKGKGFDVKLLLIGTKAIGYFTRRDYPIQATFSGLEQVPTADEANTISTDLLAEFLAESTDRVELIFTKFINLVSCKPVVQTLLPLDPQDIADPEDEIFRLTTKDGLLTVEPGAGPANTEPKIPSDIVFEQTPEQLLNALLPLYLQNQLLRSLQESAASELASRMTAMNNASDNAKELAKTLTLDYNKARQAAITQEILEVAGGAAAVG.

This sequence belongs to the ATPase gamma chain family. As to quaternary structure, F-type ATPases have 2 components, CF(1) - the catalytic core - and CF(0) - the membrane proton channel. CF(1) has five subunits: alpha(3), beta(3), gamma(1), delta(1), epsilon(1). CF(0) has three main subunits: a, b and c.

Its subcellular location is the cellular thylakoid membrane. Produces ATP from ADP in the presence of a proton gradient across the membrane. The gamma chain is believed to be important in regulating ATPase activity and the flow of protons through the CF(0) complex. This Synechococcus sp. (strain CC9605) protein is ATP synthase gamma chain.